The sequence spans 182 residues: uncharacterized protein (182 aa).

The protein belongs to the DNA 3' phosphatase family.

This is an uncharacterized protein from Autographa californica nuclear polyhedrosis virus (AcMNPV).